We begin with the raw amino-acid sequence, 485 residues long: Alpha,alpha-trehalose-phosphate synthase [UDP-forming] (485 aa).

D-glucose 6-phosphate-binding residues include tyrosine 99 and aspartate 153. 2 residues coordinate UDP: arginine 290 and lysine 295. Positions 290 and 295 each coordinate UDP-alpha-D-glucose. Arginine 328 lines the D-glucose 6-phosphate pocket. UDP contacts are provided by residues isoleucine 367 and 393–397 (LVSYE). UDP-alpha-D-glucose contacts are provided by residues isoleucine 367 and 389–397 (DGMNLVSYE).

The protein belongs to the glycosyltransferase 20 family.

It catalyses the reaction D-glucose 6-phosphate + UDP-alpha-D-glucose = alpha,alpha-trehalose 6-phosphate + UDP + H(+). The protein operates within carbohydrate biosynthesis. In terms of biological role, synthase catalytic subunit of the trehalose synthase complex that catalyzes the production of trehalose from glucose-6-phosphate and UDP-alpha-D-glucose in a two step process. The sequence is that of Alpha,alpha-trehalose-phosphate synthase [UDP-forming] from Zygosaccharomyces rouxii.